The following is a 351-amino-acid chain: Holliday junction branch migration complex subunit RuvB (351 aa).

Residues Met1–Tyr182 form a large ATPase domain (RuvB-L) region. Residues Ile21, Arg22, Gly63, Lys66, Thr67, Thr68, Glu129–Phe131, Arg172, Tyr182, and Arg219 each bind ATP. Thr67 is a Mg(2+) binding site. Residues Asn183–Asn253 form a small ATPAse domain (RuvB-S) region. Positions Arg256–Arg351 are head domain (RuvB-H). DNA contacts are provided by Arg292, Arg311, and Arg316. The disordered stretch occupies residues Leu328–Arg351.

This sequence belongs to the RuvB family. As to quaternary structure, homohexamer. Forms an RuvA(8)-RuvB(12)-Holliday junction (HJ) complex. HJ DNA is sandwiched between 2 RuvA tetramers; dsDNA enters through RuvA and exits via RuvB. An RuvB hexamer assembles on each DNA strand where it exits the tetramer. Each RuvB hexamer is contacted by two RuvA subunits (via domain III) on 2 adjacent RuvB subunits; this complex drives branch migration. In the full resolvosome a probable DNA-RuvA(4)-RuvB(12)-RuvC(2) complex forms which resolves the HJ.

It localises to the cytoplasm. It carries out the reaction ATP + H2O = ADP + phosphate + H(+). The RuvA-RuvB-RuvC complex processes Holliday junction (HJ) DNA during genetic recombination and DNA repair, while the RuvA-RuvB complex plays an important role in the rescue of blocked DNA replication forks via replication fork reversal (RFR). RuvA specifically binds to HJ cruciform DNA, conferring on it an open structure. The RuvB hexamer acts as an ATP-dependent pump, pulling dsDNA into and through the RuvAB complex. RuvB forms 2 homohexamers on either side of HJ DNA bound by 1 or 2 RuvA tetramers; 4 subunits per hexamer contact DNA at a time. Coordinated motions by a converter formed by DNA-disengaged RuvB subunits stimulates ATP hydrolysis and nucleotide exchange. Immobilization of the converter enables RuvB to convert the ATP-contained energy into a lever motion, pulling 2 nucleotides of DNA out of the RuvA tetramer per ATP hydrolyzed, thus driving DNA branch migration. The RuvB motors rotate together with the DNA substrate, which together with the progressing nucleotide cycle form the mechanistic basis for DNA recombination by continuous HJ branch migration. Branch migration allows RuvC to scan DNA until it finds its consensus sequence, where it cleaves and resolves cruciform DNA. The polypeptide is Holliday junction branch migration complex subunit RuvB (Alkalilimnicola ehrlichii (strain ATCC BAA-1101 / DSM 17681 / MLHE-1)).